The chain runs to 357 residues: NAD kinase 1 (357 aa).

Asp-68 serves as the catalytic Proton acceptor. Residues 68–69 (DG), Arg-73, 175–176 (ND), Arg-186, Asp-205, Ala-240, and Gln-275 contribute to the NAD(+) site.

This sequence belongs to the NAD kinase family. It depends on a divalent metal cation as a cofactor.

It is found in the cytoplasm. It catalyses the reaction NAD(+) + ATP = ADP + NADP(+) + H(+). In terms of biological role, involved in the regulation of the intracellular balance of NAD and NADP, and is a key enzyme in the biosynthesis of NADP. Catalyzes specifically the phosphorylation on 2'-hydroxyl of the adenosine moiety of NAD to yield NADP. The protein is NAD kinase 1 of Streptomyces avermitilis (strain ATCC 31267 / DSM 46492 / JCM 5070 / NBRC 14893 / NCIMB 12804 / NRRL 8165 / MA-4680).